Reading from the N-terminus, the 333-residue chain is Beta-ketoacyl-[acyl-carrier-protein] synthase III (333 aa).

Residues Cys-117 and His-257 contribute to the active site. An ACP-binding region spans residues 258 to 262; the sequence is QANLR. The active site involves Asn-287.

It belongs to the thiolase-like superfamily. FabH family. As to quaternary structure, homodimer.

The protein localises to the cytoplasm. It carries out the reaction malonyl-[ACP] + acetyl-CoA + H(+) = 3-oxobutanoyl-[ACP] + CO2 + CoA. Its pathway is lipid metabolism; fatty acid biosynthesis. In terms of biological role, catalyzes the condensation reaction of fatty acid synthesis by the addition to an acyl acceptor of two carbons from malonyl-ACP. Catalyzes the first condensation reaction which initiates fatty acid synthesis and may therefore play a role in governing the total rate of fatty acid production. Possesses both acetoacetyl-ACP synthase and acetyl transacylase activities. Its substrate specificity determines the biosynthesis of branched-chain and/or straight-chain of fatty acids. This chain is Beta-ketoacyl-[acyl-carrier-protein] synthase III, found in Azobacteroides pseudotrichonymphae genomovar. CFP2.